The primary structure comprises 712 residues: MWVCLQLPVFLASVTLFEVAASDTIAQAASTTTISDAVSKVKIQVNKAFLDSRTRLKTTLSSEAPTTQQLSEYFKHAKGQTRTAIRNGQVWEESFKRLRRDTTLTNVTDPSLDLTALSWEVGCGAPVPLVKCDENSPYRTITGDCNNRRSPALGAANRALARWLPAEYEDGLALPFGWTQRKTRNGFRVPLAREVSNKIVGYLDEEGVLDQNRSLLFMQWGQIVDHDLDFAPETELGSNEHSKTQCEEYCIQGDNCFPIMFPKNDPKLKTQGKCMPFFRAGFVCPTPPYQSLAREQINAVTSFLDASLVYGSEPSLASRLRNLSSPLGLMAVNQEAWDHGLAYLPFNNKKPSPCEFINTTARVPCFLAGDFRASEQILLATAHTLLLREHNRLARELKKLNPHWNGEKLYQEARKILGAFIQIITFRDYLPIVLGSEMQKWIPPYQGYNNSVDPRISNVFTFAFRFGHMEVPSTVSRLDENYQPWGPEAELPLHTLFFNTWRIIKDGGIDPLTRGLLAKKSKLMNQDKMVTSELRNKLFQPTHKIHGFDLAAINLQRCRDHGMPGYNSWRGFCGLSQPKTLKGLQTVLKNKILAKKLMDLYKTPDNIDIWIGGNAEPMVERGRVGPLLACLLGRQFQQIRDGDRFWWENPGVFTEKQRDSLQKFSFSRLICDNTHITKVPLHAFQANNYPHDFVDCSTVDKLDLSPWASREN.

Residues 1 to 22 (MWVCLQLPVFLASVTLFEVAAS) form the signal peptide. A propeptide spanning residues 23–100 (DTIAQAASTT…WEESFKRLRR (78 aa)) is cleaved from the precursor. An N-linked (GlcNAc...) (complex) asparagine; alternate glycan is attached at asparagine 106. A glycan (N-linked (GlcNAc...) (hybrid) asparagine; alternate) is linked at asparagine 106. 4 disulfides stabilise this stretch: cysteine 123–cysteine 284, cysteine 132–cysteine 145, cysteine 246–cysteine 256, and cysteine 250–cysteine 274. An N-linked (GlcNAc...) (complex) asparagine; alternate glycan is attached at asparagine 212. Asparagine 212 carries N-linked (GlcNAc...) (high mannose) asparagine; alternate glycosylation. Aspartate 225 serves as a coordination point for heme b. Histidine 226 (proton acceptor) is an active-site residue. Aspartate 227 is a Ca(2+) binding site. Ca(2+) is bound by residues threonine 301, phenylalanine 303, aspartate 305, and serine 307. Residue serine 315 is modified to Phosphoserine. N-linked (GlcNAc...) (high mannose) asparagine glycosylation is present at asparagine 322. A disulfide bond links cysteine 354 and cysteine 365. Asparagine 358 is a glycosylation site (N-linked (GlcNAc...) asparagine). Position 375 (glutamate 375) interacts with heme b. A glycan (N-linked (GlcNAc...) (complex) asparagine; alternate) is linked at asparagine 449. A glycan (N-linked (GlcNAc...) (hybrid) asparagine; alternate) is linked at asparagine 449. Asparagine 449 carries an N-linked (GlcNAc...) (high mannose) asparagine; alternate glycan. Residue histidine 468 participates in heme b binding. Position 482 is a 3'-nitrotyrosine (tyrosine 482). Cystine bridges form between cysteine 573-cysteine 630 and cysteine 671-cysteine 696.

This sequence belongs to the peroxidase family. XPO subfamily. The cofactor is Ca(2+). It depends on heme b as a cofactor. In terms of tissue distribution, mammary gland; milk.

It localises to the secreted. Its subcellular location is the cytoplasm. It carries out the reaction 2 a phenolic donor + H2O2 = 2 a phenolic radical donor + 2 H2O. It catalyses the reaction thiocyanate + H2O2 + H(+) = hypothiocyanous acid + H2O. The enzyme catalyses iodide + H2O2 = hypoiodite + H2O. Heme-containing oxidoreductase which catalyzes the conversion of thiocyanate (SCN(-)) into antimicrobial agent hypothiocyanous acid (OSCN(-)) in the presence of hydrogen peroxide (H2O2). Also involved in the conversion of iodide (I(-)) into hypoiodite (IO(-)) in the presence of H2O2. Responsible for the inactivation of a wide range of micro-organisms and hence, important component of defense mechanism. Shows antibacterial properties against E.coli, K.pneumoniae, P.aeruginosa, S.sonnei, S.saphrophyticus, S.epidermidis and S.dysenteriae. May protect the udder from infection and may promote growth in newborns. May be implicated in airway host defense against infection. May contribute to maintaining an appropriate H2O2 cellular level, therefore protecting cells from H2O2-caused injuries and inflammation. The polypeptide is Lactoperoxidase (Bubalus bubalis (Domestic water buffalo)).